Here is an 815-residue protein sequence, read N- to C-terminus: DNA topoisomerase 1 (815 aa).

The Toprim domain occupies 3-119 (KHLLIVESPA…QRIVFTEITP (117 aa)). Mg(2+)-binding residues include Glu9 and Asp82. The 441-residue stretch at 133–573 (ASDLVDAQQA…KFWVPFKELV (441 aa)) folds into the Topo IA-type catalytic domain. The segment at 167-172 (SAGRVQ) is interaction with DNA. Tyr308 functions as the O-(5'-phospho-DNA)-tyrosine intermediate in the catalytic mechanism. The segment at 759-815 (TGKPARKNFSTKKTATKNETRKQTTKKRTTDAKATKKVSDKPVKKQIKKRIAPNITQ) is disordered. The span at 774–801 (TKNETRKQTTKKRTTDAKATKKVSDKPV) shows a compositional bias: basic and acidic residues.

Belongs to the type IA topoisomerase family. In terms of assembly, monomer. Requires Mg(2+) as cofactor.

It catalyses the reaction ATP-independent breakage of single-stranded DNA, followed by passage and rejoining.. Releases the supercoiling and torsional tension of DNA, which is introduced during the DNA replication and transcription, by transiently cleaving and rejoining one strand of the DNA duplex. Introduces a single-strand break via transesterification at a target site in duplex DNA. The scissile phosphodiester is attacked by the catalytic tyrosine of the enzyme, resulting in the formation of a DNA-(5'-phosphotyrosyl)-enzyme intermediate and the expulsion of a 3'-OH DNA strand. The free DNA strand then undergoes passage around the unbroken strand, thus removing DNA supercoils. Finally, in the religation step, the DNA 3'-OH attacks the covalent intermediate to expel the active-site tyrosine and restore the DNA phosphodiester backbone. The sequence is that of DNA topoisomerase 1 from Xylella fastidiosa (strain Temecula1 / ATCC 700964).